A 387-amino-acid chain; its full sequence is Phosphoglycerate kinase (387 aa).

Substrate contacts are provided by residues 21 to 23 (DLN), arginine 36, 59 to 62 (HLGR), arginine 113, and arginine 146. ATP contacts are provided by residues lysine 197, glutamate 314, and 340 to 343 (GGDT).

This sequence belongs to the phosphoglycerate kinase family. Monomer.

Its subcellular location is the cytoplasm. It carries out the reaction (2R)-3-phosphoglycerate + ATP = (2R)-3-phospho-glyceroyl phosphate + ADP. It functions in the pathway carbohydrate degradation; glycolysis; pyruvate from D-glyceraldehyde 3-phosphate: step 2/5. The protein is Phosphoglycerate kinase of Pseudomonas syringae pv. tomato (strain ATCC BAA-871 / DC3000).